A 410-amino-acid chain; its full sequence is Histidine--tRNA ligase (410 aa).

The protein belongs to the class-II aminoacyl-tRNA synthetase family.

The protein localises to the cytoplasm. The catalysed reaction is tRNA(His) + L-histidine + ATP = L-histidyl-tRNA(His) + AMP + diphosphate + H(+). The chain is Histidine--tRNA ligase from Methanocorpusculum labreanum (strain ATCC 43576 / DSM 4855 / Z).